Here is a 438-residue protein sequence, read N- to C-terminus: tRNA(Ile)-lysidine synthase (438 aa).

27 to 32 is an ATP binding site; that stretch reads SGGVDS.

This sequence belongs to the tRNA(Ile)-lysidine synthase family.

The protein localises to the cytoplasm. The enzyme catalyses cytidine(34) in tRNA(Ile2) + L-lysine + ATP = lysidine(34) in tRNA(Ile2) + AMP + diphosphate + H(+). In terms of biological role, ligates lysine onto the cytidine present at position 34 of the AUA codon-specific tRNA(Ile) that contains the anticodon CAU, in an ATP-dependent manner. Cytidine is converted to lysidine, thus changing the amino acid specificity of the tRNA from methionine to isoleucine. In Vibrio parahaemolyticus serotype O3:K6 (strain RIMD 2210633), this protein is tRNA(Ile)-lysidine synthase.